The primary structure comprises 315 residues: Probable inactive acetaldehyde dehydrogenase 1 (315 aa).

NAD(+)-binding positions include 14 to 17 (SGDV) and Asn-288.

This sequence belongs to the acetaldehyde dehydrogenase family.

The polypeptide is Probable inactive acetaldehyde dehydrogenase 1 (Mycolicibacterium vanbaalenii (strain DSM 7251 / JCM 13017 / BCRC 16820 / KCTC 9966 / NRRL B-24157 / PYR-1) (Mycobacterium vanbaalenii)).